We begin with the raw amino-acid sequence, 1893 residues long: Protein TIC 214 (1893 aa).

6 helical membrane-spanning segments follow: residues 18–38, 63–83, 87–107, 127–147, 175–195, and 224–244; these read IINS…FSIG, AITG…YAPL, LGRP…HFFW, LSIQ…HFIL, VGWL…LVWI, and IFSI…PSPI. Composition is skewed to basic and acidic residues over residues 249-258 and 268-287; these read MKETSETEER and EIER…RSTE. The disordered stretch occupies residues 249 to 317; the sequence is MKETSETEER…TEEIRVNGKE (69 aa). Acidic residues predominate over residues 298 to 309; it reads EKEDPDKIDETE. Residues 1126–1146 form a helical membrane-spanning segment; sequence LHYFIKFFIERIYIDILLCLI.

This sequence belongs to the TIC214 family. In terms of assembly, part of the Tic complex.

The protein resides in the plastid. Its subcellular location is the chloroplast inner membrane. Its function is as follows. Involved in protein precursor import into chloroplasts. May be part of an intermediate translocation complex acting as a protein-conducting channel at the inner envelope. The protein is Protein TIC 214 of Vitis vinifera (Grape).